A 548-amino-acid chain; its full sequence is Terpene synthase 1 (548 aa).

Mg(2+) is bound by residues Asp-301, Asp-305, Asp-445, and Glu-453. Positions 301–305 (DDTYD) match the DDXXD motif motif.

This sequence belongs to the terpene synthase family. Tpsa subfamily. It depends on Mg(2+) as a cofactor. Mn(2+) serves as cofactor.

It catalyses the reaction (2E,6E)-farnesyl diphosphate = (+)-valencene + diphosphate. It participates in secondary metabolite biosynthesis; terpenoid biosynthesis. Functionally, sesquiterpene synthase involved in the biosynthesis of volatile compounds which contribute to fruit flavor and aroma. Mediates the conversion of (2E,6E)-farnesyl diphosphate (FPP) into (+)-valencene. No activity detected with geranyl diphosphate (GPP). The chain is Terpene synthase 1 from Citrus sinensis (Sweet orange).